Reading from the N-terminus, the 572-residue chain is Oxygen-dependent choline dehydrogenase (572 aa).

FAD is bound at residue 9-38 (DYVIIGGGSAGSVLGARLSEDKDKNVLVLE). The active-site Proton acceptor is the histidine 477.

The protein belongs to the GMC oxidoreductase family. FAD serves as cofactor.

The catalysed reaction is choline + A = betaine aldehyde + AH2. It catalyses the reaction betaine aldehyde + NAD(+) + H2O = glycine betaine + NADH + 2 H(+). It functions in the pathway amine and polyamine biosynthesis; betaine biosynthesis via choline pathway; betaine aldehyde from choline (cytochrome c reductase route): step 1/1. In terms of biological role, involved in the biosynthesis of the osmoprotectant glycine betaine. Catalyzes the oxidation of choline to betaine aldehyde and betaine aldehyde to glycine betaine at the same rate. In Staphylococcus epidermidis (strain ATCC 35984 / DSM 28319 / BCRC 17069 / CCUG 31568 / BM 3577 / RP62A), this protein is Oxygen-dependent choline dehydrogenase.